We begin with the raw amino-acid sequence, 113 residues long: Cytochrome c oxidase subunit 7A2-like, mitochondrial (113 aa).

Residues 1–54 constitute a mitochondrion transit peptide; it reads MYYKFSSFTQKLAGAWASEAYTPQGLKPVSTEAPPIIFATPTKLTSSVTAYDYS. Position 68 is an N6-acetyllysine (lysine 68). A helical membrane pass occupies residues 81–106; sequence PDQMLYRTTMALTLGGTIYCLIALYM.

Belongs to the cytochrome c oxidase VIIa family. Interacts with the mitochondrial respiratory complexes III (CIII) and IV (CIV), promoting their association.

It localises to the mitochondrion inner membrane. The protein operates within energy metabolism; oxidative phosphorylation. Its function is as follows. Assembly factor that mediates the formation of some mitochondrial respiratory supercomplexes (respirasomes), thereby promoting oxidative phosphorylation and energy metabolism. Acts as a molecular adapter that associates with both mitochondrial respiratory complexes III (CIII) and IV (CIV), promoting their association. Mediates the formation of various mitochondrial respiratory supercomplexes, such as MCIII(2)IV(2), composed of two CIII and two CIV, and the CS-respirasome (MCI(1)III(2)IV(2)), composed of one CI, two CIII and two CIV. Not involved in the formation of the canonical respirasome (MCI(1)III(2)IV(1)), composed of one CI, two CIII and one CIV. The formation of different respirasomes is important for cell adaptation to oxygen conditions and prevent metabolic exhaustion: supercomplexes mediated by COX7A2L/SCAF1 are required to maintain oxidative phosphorylation upon low oxygen conditions and promote metabolic rewiring toward glycolysis. The sequence is that of Cytochrome c oxidase subunit 7A2-like, mitochondrial from Mus musculus (Mouse).